The chain runs to 265 residues: Undecaprenyl-diphosphatase (265 aa).

7 consecutive transmembrane segments (helical) span residues 41 to 61 (IAYTFGLFMEMGSIGSALIYF), 75 to 95 (LKFLVVVTALTGIVGVPLYVI), 104 to 124 (YNPSIPMIFLGIALIADGIYI), 137 to 157 (LSTKEMILIGIAQGIAALPGV), 180 to 200 (YSYLAYIPAAIGSVGTTLLFT), 215 to 235 (GIALAVISALLTGLVVIGFLL), and 244 to 264 (YLIDFMLGGIAVLVSMLGLII).

Belongs to the UppP family.

Its subcellular location is the cell membrane. It carries out the reaction di-trans,octa-cis-undecaprenyl diphosphate + H2O = di-trans,octa-cis-undecaprenyl phosphate + phosphate + H(+). Catalyzes the dephosphorylation of undecaprenyl diphosphate (UPP). This is Undecaprenyl-diphosphatase from Saccharolobus islandicus (strain Y.N.15.51 / Yellowstone #2) (Sulfolobus islandicus).